The following is a 410-amino-acid chain: Venom metalloproteinase 2 (410 aa).

Positions Met1–Ser22 are cleaved as a signal peptide. Asn64, Asn112, Asn187, Asn231, Asn292, and Asn307 each carry an N-linked (GlcNAc...) asparagine glycan. In terms of domain architecture, Peptidase M12B spans Phe214 to Ser410. His365 lines the Zn(2+) pocket. Residue Glu366 is part of the active site. Zn(2+) is bound by residues His369 and His375. Residue Asn403 is glycosylated (N-linked (GlcNAc...) asparagine).

It in the C-terminal section; belongs to the venom metalloproteinase (M12B) family. As to quaternary structure, monomer. Zn(2+) is required as a cofactor. As to expression, expressed by the venom gland.

It is found in the secreted. With respect to regulation, the gelatinase activity is inhibited by EDTA. Functionally, the recombinant protein has gelatinase activity. In vivo, injection of this recombinant into fifth instar L.oleracea (host) larvae results in partial insect mortality associated with the molt to sixth instar, with surviving insects showing retarded development and growth. This is Venom metalloproteinase 2 from Eulophus pennicornis (Parasitoid wasp).